Reading from the N-terminus, the 282-residue chain is Undecaprenyl-diphosphatase (282 aa).

Helical transmembrane passes span Tyr-90–Phe-110, Leu-121–Val-141, Phe-194–Ala-214, Gln-228–Leu-248, and Met-256–Thr-276.

The protein belongs to the UppP family.

Its subcellular location is the cell membrane. It carries out the reaction di-trans,octa-cis-undecaprenyl diphosphate + H2O = di-trans,octa-cis-undecaprenyl phosphate + phosphate + H(+). In terms of biological role, catalyzes the dephosphorylation of undecaprenyl diphosphate (UPP). Confers resistance to bacitracin. This is Undecaprenyl-diphosphatase from Mycobacterium tuberculosis (strain ATCC 25618 / H37Rv).